We begin with the raw amino-acid sequence, 255 residues long: 5'-nucleotidase SurE (255 aa).

Residues D8, D9, S39, and N91 each contribute to the a divalent metal cation site.

It belongs to the SurE nucleotidase family. A divalent metal cation is required as a cofactor.

The protein localises to the cytoplasm. The enzyme catalyses a ribonucleoside 5'-phosphate + H2O = a ribonucleoside + phosphate. Its function is as follows. Nucleotidase that shows phosphatase activity on nucleoside 5'-monophosphates. The protein is 5'-nucleotidase SurE of Acinetobacter baumannii (strain SDF).